The following is a 150-amino-acid chain: Large ribosomal subunit protein bL9 (150 aa).

This sequence belongs to the bacterial ribosomal protein bL9 family.

Binds to the 23S rRNA. The protein is Large ribosomal subunit protein bL9 of Shewanella pealeana (strain ATCC 700345 / ANG-SQ1).